The chain runs to 805 residues: Mitochondrial inner membrane m-AAA protease component AFG3L2 (805 aa).

The transit peptide at 1–39 (MAHRCLLLWGRGACRPRGMPPMLLPGGRTGSTERLYLRM) directs the protein to the mitochondrion. A propeptide spans 40–67 (LYRYATTQAKTSRNSLLTDVIAAYQRLC) (removed in mature form). Residues 74–127 (FEKYFPNGKNGKKTSEPKEVMGEKKEPKPAAAPRPSGGGVGGGGKRGGKKDDSH) are disordered. Residues 86 to 101 (KTSEPKEVMGEKKEPK) show a composition bias toward basic and acidic residues. Positions 109-118 (SGGGVGGGGK) are enriched in gly residues. Residue Lys118 is modified to N6-succinyllysine. The next 2 helical transmembrane spans lie at 144–164 (FKMY…YFLF) and 252–272 (GSFL…LYTI). Positions 311, 312, 353, 354, 355, 356, 357, and 491 each coordinate ATP. His575 contributes to the Zn(2+) binding site. Residue Glu576 is part of the active site. His579 and Asp650 together coordinate Zn(2+). The disordered stretch occupies residues 760–805 (FVEGTGSLDEDTSLPEGLKDWNREREGSEEPSGEKVTSPVQGAGPA). Basic and acidic residues predominate over residues 776-787 (GLKDWNREREGS).

It in the N-terminal section; belongs to the AAA ATPase family. The protein in the C-terminal section; belongs to the peptidase M41 family. Homohexamer. Forms heterohexamers with SPG7. The m-AAA protease is either composed of homohexamers of AFG3L2 or heterohexamers of AFG3L2 and SPG7. Interacts with MAIP1. Interacts with DNAJC19. Interacts with PHB2. Zn(2+) is required as a cofactor. In terms of processing, upon import into the mitochondrion, the N-terminal transit peptide is cleaved to generate an intermediate form which undergoes autocatalytic proteolytic processing to generate the proteolytically active mature form.

It is found in the mitochondrion inner membrane. The catalysed reaction is ATP + H2O = ADP + phosphate + H(+). Functionally, catalytic component of the m-AAA protease, a protease that plays a key role in proteostasis of inner mitochondrial membrane proteins, and which is essential for axonal and neuron development. AFG3L2 possesses both ATPase and protease activities: the ATPase activity is required to unfold substrates, threading them into the internal proteolytic cavity for hydrolysis into small peptide fragments. The m-AAA protease carries out protein quality control in the inner membrane of the mitochondria by mediating degradation of mistranslated or misfolded polypeptides. The m-AAA protease complex also promotes the processing and maturation of mitochondrial proteins, such as MRPL32/bL32m, PINK1 and SP7. Mediates protein maturation of the mitochondrial ribosomal subunit MRPL32/bL32m by catalyzing the cleavage of the presequence of MRPL32/bL32m prior to assembly into the mitochondrial ribosome. Required for SPG7 maturation into its active mature form after SPG7 cleavage by mitochondrial-processing peptidase (MPP). Required for the maturation of PINK1 into its 52kDa mature form after its cleavage by mitochondrial-processing peptidase (MPP). Acts as a regulator of calcium in neurons by mediating degradation of SMDT1/EMRE before its assembly with the uniporter complex, limiting the availability of SMDT1/EMRE for MCU assembly and promoting efficient assembly of gatekeeper subunits with MCU. Promotes the proteolytic degradation of GHITM upon hyperpolarization of mitochondria: progressive GHITM degradation leads to respiratory complex I degradation and broad reshaping of the mitochondrial proteome by AFG3L2. Also acts as a regulator of mitochondrial glutathione homeostasis by mediating cleavage and degradation of SLC25A39. SLC25A39 cleavage is prevented when SLC25A39 binds iron-sulfur. Involved in the regulation of OMA1-dependent processing of OPA1. May act by mediating processing of OMA1 precursor, participating in OMA1 maturation. This is Mitochondrial inner membrane m-AAA protease component AFG3L2 (AFG3L2) from Bos taurus (Bovine).